The chain runs to 266 residues: Hemin import ATP-binding protein HmuV (266 aa).

The ABC transporter domain maps to 12–248 (LEASHLHYHV…ETLTQWYQAD (237 aa)). Position 44–51 (44–51 (GPNGAGKS)) interacts with ATP.

This sequence belongs to the ABC transporter superfamily. Heme (hemin) importer (TC 3.A.1.14.5) family. The complex is composed of two ATP-binding proteins (HmuV), two transmembrane proteins (HmuU) and a solute-binding protein (HmuT).

The protein localises to the cell inner membrane. Its function is as follows. Part of the ABC transporter complex HmuTUV involved in hemin import. Responsible for energy coupling to the transport system. The protein is Hemin import ATP-binding protein HmuV of Yersinia pestis bv. Antiqua (strain Antiqua).